Here is a 295-residue protein sequence, read N- to C-terminus: Elongation factor Ts (295 aa).

Residues 79–82 form an involved in Mg(2+) ion dislocation from EF-Tu region; the sequence is TDFV.

It belongs to the EF-Ts family.

Its subcellular location is the cytoplasm. In terms of biological role, associates with the EF-Tu.GDP complex and induces the exchange of GDP to GTP. It remains bound to the aminoacyl-tRNA.EF-Tu.GTP complex up to the GTP hydrolysis stage on the ribosome. This Bacillus cereus (strain G9842) protein is Elongation factor Ts.